We begin with the raw amino-acid sequence, 759 residues long: Probable Na(+)/H(+) antiporter C3A11.09 (759 aa).

A run of 11 helical transmembrane segments spans residues 12 to 32 (HLAYAIIGGFTSLFMLCSLII), 36 to 56 (LFLGEATMATATGLIFGPYVA), 105 to 125 (MLLPVMIFGWLVSTGFMYALI), 133 to 153 (SLAIAACITATDPVLASSIVG), 172 to 192 (ESGCNDGMAIPFLYLAIYLII), 206 to 226 (IIILYECTFGCVLGAIIGVIA), 244 to 264 (FLVFYFVLALFCGGIGTIIGV), 295 to 315 (VIDLLLNLSFFVYVGAIMPWP), 319 to 339 (MPHMDLSVWRLVVLAICILIA), 361 to 381 (ALFAGHFGPIGVGALYTCLVA), and 415 to 435 (VVCFLVLSSIIVHGSSIAFFM). T442 bears the Phosphothreonine mark. Position 446 is a phosphoserine (S446). At T448 the chain carries Phosphothreonine. Basic and acidic residues-rich tracts occupy residues 514–529 (LREERAESPRGGHYDA), 537–547 (YESRQPRRSNE), 590–601 (IDEKLAQGDPKA), 622–647 (NLHEPDDERQREPTLGHIESSIENHR), and 655–671 (SESHLRENSVERRRREQ). Disordered stretches follow at residues 514–558 (LREE…NPGD), 578–606 (SHTSSRDANGPSIDEKLAQGDPKAKSFGR), and 622–759 (NLHE…RAWE). The span at 696-713 (NENNESSSDTRNGLLSDN) shows a compositional bias: polar residues. N-linked (GlcNAc...) asparagine glycans are attached at residues N699 and N713. Over residues 724 to 733 (RAPSAAVSSE) the composition is skewed to low complexity. S735 bears the Phosphoserine mark.

The protein belongs to the fungal Na(+)/H(+) exchanger family.

Its subcellular location is the membrane. Sodium export from cell, takes up external protons in exchange for internal sodium ions. The protein is Probable Na(+)/H(+) antiporter C3A11.09 (sod22) of Schizosaccharomyces pombe (strain 972 / ATCC 24843) (Fission yeast).